We begin with the raw amino-acid sequence, 320 residues long: GGLLLLGLLIVLLQAAPAVQCLRSAESRSNSLKIVGSILFPVKVYVKLDHSSPHILCVTNRLRNSELIDPVFRWNGPSGYLSSANSSVQISPTGTLILGHFRSDLSGVYTCSLVYKLIAAQPDKRLTIKYHIYAYSDPQYYYELTVQYHAAPCNSFHNTSFGRALLQILSKLVADLSCEVSLIKSECHHVKMQRGGLQSEMFFKFSVTCLDTENNKLCRQSACDKPHRLHKAKDLIERFFKREVEIRKKSTEPLPEIYYIEGTLQMVWVDRCYPGYGINAVRHPDCPECCVICSPRSYNPSNGIHCLQCDTSLIYGATTC.

Residues N85 and N158 are each glycosylated (N-linked (GlcNAc...) asparagine).

This sequence belongs to the zona pellucida-binding protein Sp38 family.

Its subcellular location is the cytoplasmic vesicle. The protein resides in the secretory vesicle. The protein localises to the acrosome. It localises to the secreted. It is found in the acrosome membrane. Functionally, plays a role in sperm morphogenesis and in sperm-oocyte interaction during fertilization. In Gallus gallus (Chicken), this protein is Zona pellucida-binding protein 1 (ZPBP1).